A 389-amino-acid polypeptide reads, in one-letter code: Multidrug resistance protein 1 (389 aa).

The next 11 helical transmembrane spans lie at isoleucine 6 to isoleucine 26, alanine 42 to glycine 62, lysine 71 to glycine 91, methionine 102 to isoleucine 122, tyrosine 134 to alanine 154, leucine 160 to leucine 180, isoleucine 202 to alanine 222, isoleucine 243 to aspartate 263, valine 286 to phenylalanine 306, serine 336 to isoleucine 356, and valine 358 to alanine 378.

Belongs to the major facilitator superfamily. TCR/Tet family.

Its subcellular location is the cell membrane. Energy-dependent efflux pump responsible for decreased drug accumulation in multi-drug-resistant cells. Probably uses a transmembrane proton gradient as the energy source. Causes the efflux of a variety of toxic substances, including such structurally diverse compounds as ethidium bromide, rhodamine and acridine dyes, tetraphenylphosphonium, puromycin, chloramphenicol, doxorubicin, and fluoroquinolone antibiotics. In Bacillus subtilis (strain 168), this protein is Multidrug resistance protein 1 (bmr).